Reading from the N-terminus, the 140-residue chain is DPNVAFYSVVAVICWQYIPFYMIFFIAALSNIPQELYEAAKIDGATQGQYFWRIELPLLTPSIKTACILSLIGSLKYFDLIYVMTEGGPSNATELMATYMYKNAFASFKMGYGSTIASAMFLIITTAGIFAYFVTRRKEE.

An ABC transmembrane type-1 domain is found at 1–133 (DPNVAFYSVV…ITTAGIFAYF (133 aa)). 3 helical membrane-spanning segments follow: residues 9–29 (VVAVICWQYIPFYMIFFIAAL), 65–85 (TACILSLIGSLKYFDLIYVMT), and 115–135 (TIASAMFLIITTAGIFAYFVT).

The protein belongs to the binding-protein-dependent transport system permease family. MalFG subfamily.

It is found in the cell membrane. Functionally, may play a role in sugar transport. In Caldicellulosiruptor sp. (strain Rt8B.4), this protein is Putative ABC transporter permease protein ORF1.